Here is a 258-residue protein sequence, read N- to C-terminus: Alpha-hydroxynitrile lyase (258 aa).

Residues Ser81 and His236 each act as proton donor/acceptor in the active site.

The protein belongs to the AB hydrolase superfamily. Hydroxynitrile lyase family. Homodimer.

It catalyses the reaction (R)-mandelonitrile = benzaldehyde + hydrogen cyanide. Its function is as follows. Involved in cyanogenesis, the release of HCN from injured tissues. Displays R-selective hydroxynitrile lyase activity. Also accepts nitromethane (MeNO2) as a donor in a reaction with aromatic aldehydes to yield (R)-beta-nitro alcohols. This chain is Alpha-hydroxynitrile lyase, found in Arabidopsis thaliana (Mouse-ear cress).